A 157-amino-acid polypeptide reads, in one-letter code: Ribosomal RNA large subunit methyltransferase H (157 aa).

S-adenosyl-L-methionine contacts are provided by residues leucine 74, glycine 106, and 125–130 (LSDMTL).

Belongs to the RNA methyltransferase RlmH family. In terms of assembly, homodimer.

It is found in the cytoplasm. It carries out the reaction pseudouridine(1915) in 23S rRNA + S-adenosyl-L-methionine = N(3)-methylpseudouridine(1915) in 23S rRNA + S-adenosyl-L-homocysteine + H(+). In terms of biological role, specifically methylates the pseudouridine at position 1915 (m3Psi1915) in 23S rRNA. The protein is Ribosomal RNA large subunit methyltransferase H of Desulfovibrio desulfuricans (strain ATCC 27774 / DSM 6949 / MB).